A 110-amino-acid chain; its full sequence is UPF0060 membrane protein Francci3_2786 (110 aa).

4 consecutive transmembrane segments (helical) span residues 8–28 (LLFV…WQGV), 33–53 (GPVW…VATL), 62–82 (ILAA…VAVD), and 87–107 (DRYD…IMYA).

It belongs to the UPF0060 family.

The protein localises to the cell membrane. The sequence is that of UPF0060 membrane protein Francci3_2786 from Frankia casuarinae (strain DSM 45818 / CECT 9043 / HFP020203 / CcI3).